Consider the following 965-residue polypeptide: Pullulanase 1, chloroplastic (965 aa).

The transit peptide at 1-62 (MALTLTPTSS…SKTSLHCLCS (62 aa)) directs the protein to the chloroplast. The Nucleophile role is filled by D552. E589 functions as the Proton donor in the catalytic mechanism.

The protein belongs to the glycosyl hydrolase 13 family.

The protein localises to the plastid. It localises to the chloroplast stroma. The enzyme catalyses Hydrolysis of (1-&gt;6)-alpha-D-glucosidic linkages in alpha- and beta-limit dextrins of amylopectin and glycogen, and in amylopectin and pullulan.. The protein operates within glycan biosynthesis; starch biosynthesis. Its pathway is glycan degradation; starch degradation. Functionally, involved in starch degradation and also probably in the trimming of pre-amylopectin chains during starch synthesis. The sequence is that of Pullulanase 1, chloroplastic (PU1) from Arabidopsis thaliana (Mouse-ear cress).